Here is a 394-residue protein sequence, read N- to C-terminus: Actin-related protein 2 (394 aa).

Residue Met1 is modified to N-acetylmethionine. ATP-binding positions include 160 to 162 and 214 to 218; these read GDG and RMIKE. An N6-acetyllysine modification is found at Lys299. 305 to 310 is an ATP binding site; it reads GGSTMY. N6-acetyllysine is present on Lys322.

Belongs to the actin family. ARP2 subfamily. Component of the Arp2/3 complex composed of ACTR2/ARP2, ACTR3/ARP3, ARPC1B/p41-ARC, ARPC2/p34-ARC, ARPC3/p21-ARC, ARPC4/p20-ARC and ARPC5/p16-ARC. Interacts with AVIL.

It is found in the cytoplasm. The protein resides in the cytoskeleton. Its subcellular location is the cell projection. The protein localises to the nucleus. ATP-binding component of the Arp2/3 complex, a multiprotein complex that mediates actin polymerization upon stimulation by nucleation-promoting factor (NPF). The Arp2/3 complex mediates the formation of branched actin networks in the cytoplasm, providing the force for cell motility. Seems to contact the pointed end of the daughter actin filament. In podocytes, required for the formation of lamellipodia downstream of AVIL and PLCE1 regulation. In addition to its role in the cytoplasmic cytoskeleton, the Arp2/3 complex also promotes actin polymerization in the nucleus, thereby regulating gene transcription and repair of damaged DNA. The Arp2/3 complex promotes homologous recombination (HR) repair in response to DNA damage by promoting nuclear actin polymerization, leading to drive motility of double-strand breaks (DSBs). The polypeptide is Actin-related protein 2 (ACTR2) (Pongo abelii (Sumatran orangutan)).